A 447-amino-acid chain; its full sequence is Tubulin beta chain (447 aa).

GTP contacts are provided by Gln11, Glu69, Ser138, Gly142, Thr143, Gly144, Asn204, and Asn226. Glu69 contacts Mg(2+). The interval 424-447 (QYQEASVSEGEEEYDEEAPLEGEE) is disordered. Over residues 432 to 447 (EGEEEYDEEAPLEGEE) the composition is skewed to acidic residues.

The protein belongs to the tubulin family. As to quaternary structure, dimer of alpha and beta chains. A typical microtubule is a hollow water-filled tube with an outer diameter of 25 nm and an inner diameter of 15 nM. Alpha-beta heterodimers associate head-to-tail to form protofilaments running lengthwise along the microtubule wall with the beta-tubulin subunit facing the microtubule plus end conferring a structural polarity. Microtubules usually have 13 protofilaments but different protofilament numbers can be found in some organisms and specialized cells. The cofactor is Mg(2+).

It is found in the cytoplasm. The protein localises to the cytoskeleton. In terms of biological role, tubulin is the major constituent of microtubules, a cylinder consisting of laterally associated linear protofilaments composed of alpha- and beta-tubulin heterodimers. Microtubules grow by the addition of GTP-tubulin dimers to the microtubule end, where a stabilizing cap forms. Below the cap, tubulin dimers are in GDP-bound state, owing to GTPase activity of alpha-tubulin. The sequence is that of Tubulin beta chain (TUB1) from Cercospora beticola (Sugarbeet leaf spot fungus).